The following is a 1117-amino-acid chain: Isoleucine--tRNA ligase (1117 aa).

The 'HIGH' region signature appears at 64–74; it reads PFANGLPHYGH. The 'KMSKS' region signature appears at 647–651; that stretch reads KLSKR. Position 650 (Lys650) interacts with ATP.

The protein belongs to the class-I aminoacyl-tRNA synthetase family. IleS type 2 subfamily. Monomer. It depends on Zn(2+) as a cofactor.

Its subcellular location is the cytoplasm. The enzyme catalyses tRNA(Ile) + L-isoleucine + ATP = L-isoleucyl-tRNA(Ile) + AMP + diphosphate. Functionally, catalyzes the attachment of isoleucine to tRNA(Ile). As IleRS can inadvertently accommodate and process structurally similar amino acids such as valine, to avoid such errors it has two additional distinct tRNA(Ile)-dependent editing activities. One activity is designated as 'pretransfer' editing and involves the hydrolysis of activated Val-AMP. The other activity is designated 'posttransfer' editing and involves deacylation of mischarged Val-tRNA(Ile). This Ehrlichia ruminantium (strain Welgevonden) protein is Isoleucine--tRNA ligase.